Consider the following 244-residue polypeptide: Probable ABC transporter ATP-binding protein in ycf23-apcF intergenic region (244 aa).

Positions L9 to I241 constitute an ABC transporter domain. G41 to S48 provides a ligand contact to ATP.

It belongs to the ABC transporter superfamily.

It localises to the plastid. It is found in the cyanelle. This Cyanophora paradoxa protein is Probable ABC transporter ATP-binding protein in ycf23-apcF intergenic region.